Here is a 93-residue protein sequence, read N- to C-terminus: Large ribosomal subunit protein uL23 (93 aa).

The protein belongs to the universal ribosomal protein uL23 family. In terms of assembly, part of the 50S ribosomal subunit. Contacts protein L29, and trigger factor when it is bound to the ribosome.

Its function is as follows. One of the early assembly proteins it binds 23S rRNA. One of the proteins that surrounds the polypeptide exit tunnel on the outside of the ribosome. Forms the main docking site for trigger factor binding to the ribosome. The polypeptide is Large ribosomal subunit protein uL23 (Helicobacter pylori (strain P12)).